Here is a 338-residue protein sequence, read N- to C-terminus: Probable G-protein coupled receptor 160 (338 aa).

Residues 1–23 (MTALSSENCSFQYQLRQTNQPLD) lie on the Extracellular side of the membrane. Asn8 carries an N-linked (GlcNAc...) asparagine glycan. A helical membrane pass occupies residues 24–44 (VNYLLFLIILGKILLNILTLG). At 45-58 (MRRKNTCQNFMEYF) the chain is on the cytoplasmic side. The chain crosses the membrane as a helical span at residues 59 to 79 (CISLAFVDLLLLVNISIILYF). The Extracellular segment spans residues 80–93 (RDFVLLSIRFTKYH). The chain crosses the membrane as a helical span at residues 94–114 (ICLFTQIISFTYGFLHYPVFL). Topologically, residues 115-136 (TACIDYCLNFSKTTKLSFKCQK) are cytoplasmic. The chain crosses the membrane as a helical span at residues 137-157 (LFYFFTVILIWISVLAYVLGD). Topologically, residues 158–177 (PAIYQSLKAQNAYSRHCPFY) are extracellular. Residues 178–198 (VSIQSYWLSFFMVMILFVAFI) traverse the membrane as a helical segment. Residues 199 to 244 (TCWEEVTTLVQAIRITSYMNETILYFPFSSHSSYTVRSKKIFLSKL) lie on the Cytoplasmic side of the membrane. A helical transmembrane segment spans residues 245-265 (IVCFLSTWLPFVLLQVIIVLL). Topologically, residues 266–268 (KVQ) are extracellular. The chain crosses the membrane as a helical span at residues 269–289 (IPAYIEMNIPWLYFVNSFLIA). Residues 290-338 (TVYWFNCHKLNLKDIGLPLDPFVNWKCCFIPLTIPNLEQIEKPISIMIC) lie on the Cytoplasmic side of the membrane.

It belongs to the G-protein coupled receptor 1 family.

Its subcellular location is the cell membrane. Its function is as follows. Orphan receptor. This Homo sapiens (Human) protein is Probable G-protein coupled receptor 160 (GPR160).